The primary structure comprises 436 residues: 3-ketoacyl-CoA thiolase (436 aa).

The active-site Acyl-thioester intermediate is the cysteine 99. Active-site proton acceptor residues include histidine 392 and cysteine 422.

Belongs to the thiolase-like superfamily. Thiolase family. In terms of assembly, heterotetramer of two alpha chains (FadJ) and two beta chains (FadI).

The protein resides in the cytoplasm. It carries out the reaction an acyl-CoA + acetyl-CoA = a 3-oxoacyl-CoA + CoA. It functions in the pathway lipid metabolism; fatty acid beta-oxidation. Functionally, catalyzes the final step of fatty acid oxidation in which acetyl-CoA is released and the CoA ester of a fatty acid two carbons shorter is formed. The protein is 3-ketoacyl-CoA thiolase of Yersinia enterocolitica serotype O:8 / biotype 1B (strain NCTC 13174 / 8081).